The sequence spans 216 residues: Large ribosomal subunit protein uL3 (216 aa).

The tract at residues 135-156 (LGASHGTQRKHRSPGSIGGCAT) is disordered.

It belongs to the universal ribosomal protein uL3 family. Part of the 50S ribosomal subunit. Forms a cluster with proteins L14 and L19.

Its function is as follows. One of the primary rRNA binding proteins, it binds directly near the 3'-end of the 23S rRNA, where it nucleates assembly of the 50S subunit. The chain is Large ribosomal subunit protein uL3 from Thermobifida fusca (strain YX).